Reading from the N-terminus, the 692-residue chain is Meiotic sister-chromatid recombination protein 6, mitochondrial (692 aa).

Residues 1–30 (MLSHNALRAFDCSKVIISRRCLTSSTSIYQ) constitute a mitochondrion transit peptide.

Its subcellular location is the mitochondrion. Functionally, may be involved in the control of meiotic sister-chromatid recombination. In Saccharomyces cerevisiae (strain ATCC 204508 / S288c) (Baker's yeast), this protein is Meiotic sister-chromatid recombination protein 6, mitochondrial (MSC6).